The following is a 94-amino-acid chain: Co-chaperonin GroES (94 aa).

It belongs to the GroES chaperonin family. As to quaternary structure, heptamer of 7 subunits arranged in a ring. Interacts with the chaperonin GroEL.

It is found in the cytoplasm. Together with the chaperonin GroEL, plays an essential role in assisting protein folding. The GroEL-GroES system forms a nano-cage that allows encapsulation of the non-native substrate proteins and provides a physical environment optimized to promote and accelerate protein folding. GroES binds to the apical surface of the GroEL ring, thereby capping the opening of the GroEL channel. The polypeptide is Co-chaperonin GroES (Ehrlichia ruminantium (strain Gardel)).